The chain runs to 299 residues: MLKSSKKEDSSKKNQNNKLIFTVRKLFSPIKNFFRKTKTPDNFFGVIKRLKINSQKMTLDERNILANLLELEDKTIEDIMVPRSDIAAIKLTTNLEELSESIKLEVPHTRTLIYDGTLDNVVGFIHIKDLFKALATKQNGRLKKLIRKHIIAAPSMKLLDLLAKMRRERTHIAIVVDEYGGTDGLVTIEDLIEEIVGRIDDEHDQQLDSDNFKVINNSTIIANARVEVEVLEEIIGEKLHNDYDEFDTIGGLVLTRVSSVPAIGTRIDISENIEIEVTDATPRSLKQVKIRLKNGLNGQ.

2 consecutive CBS domains span residues 80-142 and 145-202; these read MVPR…NGRL and LIRK…IDDE.

It belongs to the UPF0053 family. Hemolysin C subfamily.

This chain is Hemolysin C homolog (tlyC), found in Rickettsia conorii (strain ATCC VR-613 / Malish 7).